We begin with the raw amino-acid sequence, 591 residues long: Aspartate--tRNA(Asp/Asn) ligase (591 aa).

Residue Glu-175 participates in L-aspartate binding. Residues 199–202 (QQFK) are aspartate. 2 residues coordinate L-aspartate: Arg-221 and His-453. Residue 221–223 (RDE) coordinates ATP. Residue Glu-486 participates in ATP binding. An L-aspartate-binding site is contributed by Arg-493. 538-541 (GIDR) provides a ligand contact to ATP.

Belongs to the class-II aminoacyl-tRNA synthetase family. Type 1 subfamily. In terms of assembly, homodimer.

It is found in the cytoplasm. It carries out the reaction tRNA(Asx) + L-aspartate + ATP = L-aspartyl-tRNA(Asx) + AMP + diphosphate. Functionally, aspartyl-tRNA synthetase with relaxed tRNA specificity since it is able to aspartylate not only its cognate tRNA(Asp) but also tRNA(Asn). Reaction proceeds in two steps: L-aspartate is first activated by ATP to form Asp-AMP and then transferred to the acceptor end of tRNA(Asp/Asn). This Paracoccus denitrificans (strain Pd 1222) protein is Aspartate--tRNA(Asp/Asn) ligase.